Reading from the N-terminus, the 150-residue chain is Large ribosomal subunit protein uL22c (150 aa).

It belongs to the universal ribosomal protein uL22 family. In terms of assembly, part of the 50S ribosomal subunit.

The protein localises to the plastid. In terms of biological role, this protein binds specifically to 23S rRNA. Its function is as follows. The globular domain of the protein is located near the polypeptide exit tunnel on the outside of the subunit, while an extended beta-hairpin is found that lines the wall of the exit tunnel in the center of the 70S ribosome. The chain is Large ribosomal subunit protein uL22c (rpl22) from Orobanche minor (Small broomrape).